The primary structure comprises 229 residues: NAD(P)H-quinone oxidoreductase subunit K, chloroplastic (229 aa).

[4Fe-4S] cluster-binding residues include cysteine 43, cysteine 44, cysteine 108, and cysteine 139.

This sequence belongs to the complex I 20 kDa subunit family. NDH is composed of at least 16 different subunits, 5 of which are encoded in the nucleus. Requires [4Fe-4S] cluster as cofactor.

Its subcellular location is the plastid. The protein localises to the chloroplast thylakoid membrane. The catalysed reaction is a plastoquinone + NADH + (n+1) H(+)(in) = a plastoquinol + NAD(+) + n H(+)(out). The enzyme catalyses a plastoquinone + NADPH + (n+1) H(+)(in) = a plastoquinol + NADP(+) + n H(+)(out). NDH shuttles electrons from NAD(P)H:plastoquinone, via FMN and iron-sulfur (Fe-S) centers, to quinones in the photosynthetic chain and possibly in a chloroplast respiratory chain. The immediate electron acceptor for the enzyme in this species is believed to be plastoquinone. Couples the redox reaction to proton translocation, and thus conserves the redox energy in a proton gradient. This is NAD(P)H-quinone oxidoreductase subunit K, chloroplastic from Coffea arabica (Arabian coffee).